The chain runs to 82 residues: Small ribosomal subunit protein bS16 (82 aa).

The protein belongs to the bacterial ribosomal protein bS16 family.

The chain is Small ribosomal subunit protein bS16 from Blochmanniella floridana.